We begin with the raw amino-acid sequence, 475 residues long: UDP-N-acetylmuramate--L-alanine ligase (475 aa).

Residue 114-120 (GTHGKTT) coordinates ATP.

The protein belongs to the MurCDEF family.

It localises to the cytoplasm. The catalysed reaction is UDP-N-acetyl-alpha-D-muramate + L-alanine + ATP = UDP-N-acetyl-alpha-D-muramoyl-L-alanine + ADP + phosphate + H(+). Its pathway is cell wall biogenesis; peptidoglycan biosynthesis. Its function is as follows. Cell wall formation. In Bartonella henselae (strain ATCC 49882 / DSM 28221 / CCUG 30454 / Houston 1) (Rochalimaea henselae), this protein is UDP-N-acetylmuramate--L-alanine ligase.